The sequence spans 331 residues: MALQQGGDYYGTSNVVAQKFYRGQDNQRPAGCVLPSIDCLLHDKTTYSGNRDYNNENSKGFAEANGHEIFDPQGFKETVSICDRRALEAPPHQNYPVQNLNGMGGAFYNSDSNGQQFVQSYDNLPFGKIKISHASDQKSRPKPTKPRASRKRAAIAQSKKKRSGGDLTLDGLVQLLGEIVDPVKLQAEIDEQKSRQSTSQPDKEIVQSSQYSHNGFIQHASPQIYNYNYQGYTMVQAEAYQPQYQEHVQYTQYSQGPINQTNIQEVQSEDSEGIYEYFVDQPNYSNQGTNQGTCQGFIQINGNFQENVQIVSQDNVQGSSQGYIQEYYQYE.

Disordered stretches follow at residues 131–163 and 190–209; these read ISHA…KKRS and DEQK…VQSS. The span at 140-162 shows a compositional bias: basic residues; the sequence is RPKPTKPRASRKRAAIAQSKKKR. A compositionally biased stretch (polar residues) spans 195 to 209; it reads RQSTSQPDKEIVQSS.

This is an uncharacterized protein from Caenorhabditis elegans.